A 211-amino-acid polypeptide reads, in one-letter code: Allatostatins MIP (211 aa).

Positions 1-24 (MAHTKTRRTYGFLMVLLILGSACG) are cleaved as a signal peptide. Residues 25-63 (NLVASGSAGSPPSNEPGGGGLSEQVVLDQLSESDLYGNN) constitute a propeptide that is removed on maturation. Position 74 is a tryptophan amide (Trp74). Positions 78–148 (SSSGDVSDPD…DDLAGEPDVE (71 aa)) are excised as a propeptide. Positions 115–135 (ASGQSAQQQQQQPLQQQSQSG) are enriched in low complexity. The interval 115-142 (ASGQSAQQQQQQPLQQQSQSGEDFDDLA) is disordered. Tryptophan amide occurs at positions 159, 175, 189, and 202. The tract at residues 168-190 (WNKFRGAWGKREPTWNNLKGMWG) is disordered. Residues 206–211 (SQLPSN) constitute a propeptide that is removed on maturation.

As to expression, in larvae, strongly expressed in the midgut region before and in between the copper cells, and in a group of cells in the posterior part of the larval midgut. Expressed in the neurons of many areas including the subesophageal ganglion/tritocerebrum (SOG), olfactory glomeruli, lateral ventral protocerebrum, mushroom body, the optic lobe medulla and in the antennal lobes.

The protein localises to the secreted. Ligand for the sex peptide receptor (SPR). Stabilizes sleep and maintains sleep homeostasis to inhibit the activity of wake-promoting circuits, such as those that involve the pigment dispersing factor (pdf) neurons. Regulated by the circadian clock network and pathways associated with a sleep homeostat. May also have a regulatory role in gut motility. In Drosophila melanogaster (Fruit fly), this protein is Allatostatins MIP (Mip).